A 232-amino-acid chain; its full sequence is Ribose-5-phosphate isomerase A (232 aa).

Substrate-binding positions include 31-34, 87-90, and 100-103; these read TGST, DGAD, and KGGG. Glu-109 (proton acceptor) is an active-site residue. Lys-127 serves as a coordination point for substrate.

Belongs to the ribose 5-phosphate isomerase family. In terms of assembly, homodimer.

It catalyses the reaction aldehydo-D-ribose 5-phosphate = D-ribulose 5-phosphate. It participates in carbohydrate degradation; pentose phosphate pathway; D-ribose 5-phosphate from D-ribulose 5-phosphate (non-oxidative stage): step 1/1. Its function is as follows. Catalyzes the reversible conversion of ribose-5-phosphate to ribulose 5-phosphate. The polypeptide is Ribose-5-phosphate isomerase A (Bifidobacterium longum subsp. infantis (strain ATCC 15697 / DSM 20088 / JCM 1222 / NCTC 11817 / S12)).